A 502-amino-acid polypeptide reads, in one-letter code: Lysine--tRNA ligase (502 aa).

Positions 398 and 405 each coordinate Mg(2+).

Belongs to the class-II aminoacyl-tRNA synthetase family. As to quaternary structure, homodimer. It depends on Mg(2+) as a cofactor.

It localises to the cytoplasm. It carries out the reaction tRNA(Lys) + L-lysine + ATP = L-lysyl-tRNA(Lys) + AMP + diphosphate. This chain is Lysine--tRNA ligase, found in Thermosipho melanesiensis (strain DSM 12029 / CIP 104789 / BI429).